We begin with the raw amino-acid sequence, 80 residues long: Probable Rubredoxin-1 (80 aa).

The region spanning 19 to 72 is the Rubredoxin-like domain; it reads YRKYKCKVCGWVYDPLKGDPSQNIPPKTPFEELPDTWICPVCRGKVGKESFEPL. Cys-24, Cys-27, Cys-57, and Cys-60 together coordinate Fe cation.

This sequence belongs to the rubredoxin family. Fe(3+) serves as cofactor.

In terms of biological role, rubredoxin is a small nonheme, iron protein lacking acid-labile sulfide. Its single Fe, chelated to 4 Cys, functions as an electron acceptor and may also stabilize the conformation of the molecule. This Methanocaldococcus jannaschii (strain ATCC 43067 / DSM 2661 / JAL-1 / JCM 10045 / NBRC 100440) (Methanococcus jannaschii) protein is Probable Rubredoxin-1.